We begin with the raw amino-acid sequence, 72 residues long: Dermaseptin AA-3-4 (72 aa).

A signal peptide spans 1 to 22; the sequence is MAFLKKSLFLVLFLGLVSLSIC. Residues 23-43 constitute a propeptide that is removed on maturation; the sequence is DEEKRENEDEEEQEDDEQSEE. The segment at 24–45 is disordered; the sequence is EEKRENEDEEEQEDDEQSEEKR. Residues 30–41 are compositionally biased toward acidic residues; it reads EDEEEQEDDEQS.

The protein belongs to the frog skin active peptide (FSAP) family. Expressed by the skin glands.

It is found in the secreted. In terms of biological role, possesses a potent antimicrobial activity against Gram-positive and Gram-negative bacteria. Probably acts by disturbing membrane functions with its amphipathic structure. The polypeptide is Dermaseptin AA-3-4 (Agalychnis annae (Blue-sided leaf frog)).